We begin with the raw amino-acid sequence, 184 residues long: Photosystem I assembly protein Ycf4 (184 aa).

Transmembrane regions (helical) follow at residues 22–42 (FCWA…GTSS) and 57–77 (IIFF…LFIS).

Belongs to the Ycf4 family.

It is found in the plastid. The protein localises to the chloroplast thylakoid membrane. In terms of biological role, seems to be required for the assembly of the photosystem I complex. This chain is Photosystem I assembly protein Ycf4, found in Draba nemorosa (Woodland whitlowgrass).